The sequence spans 159 residues: MEQSHQNLQSQFFIEHILQILPHRYPMLLVDRIIELQANKKIVAYKNITFNEDVFNGHFPNKPIFPGVLIVEGMAQTGGFLAFTSLWGFDPEIAKTKIVYFMTIDKVKFRIPVTPGDRLEYHLEVLKHKGMIWQVGGTAQVDGKVVAEAELKAMIAERD.

H58 is an active-site residue.

The protein belongs to the thioester dehydratase family. FabZ subfamily.

It localises to the cytoplasm. It catalyses the reaction a (3R)-hydroxyacyl-[ACP] = a (2E)-enoyl-[ACP] + H2O. Its function is as follows. Involved in unsaturated fatty acids biosynthesis. Catalyzes the dehydration of short chain beta-hydroxyacyl-ACPs and long chain saturated and unsaturated beta-hydroxyacyl-ACPs. The sequence is that of 3-hydroxyacyl-[acyl-carrier-protein] dehydratase FabZ from Helicobacter pylori (strain ATCC 700392 / 26695) (Campylobacter pylori).